We begin with the raw amino-acid sequence, 310 residues long: Coproporphyrin III ferrochelatase (310 aa).

Fe-coproporphyrin III is bound by residues Tyr-13, Arg-30, 46–47 (RY), Ser-54, and Tyr-125. Fe(2+) contacts are provided by His-181 and Glu-262.

It belongs to the ferrochelatase family.

It is found in the cytoplasm. The enzyme catalyses Fe-coproporphyrin III + 2 H(+) = coproporphyrin III + Fe(2+). The protein operates within porphyrin-containing compound metabolism; protoheme biosynthesis. In terms of biological role, involved in coproporphyrin-dependent heme b biosynthesis. Catalyzes the insertion of ferrous iron into coproporphyrin III to form Fe-coproporphyrin III. The sequence is that of Coproporphyrin III ferrochelatase from Halalkalibacterium halodurans (strain ATCC BAA-125 / DSM 18197 / FERM 7344 / JCM 9153 / C-125) (Bacillus halodurans).